Reading from the N-terminus, the 611-residue chain is Creatine transporter (611 aa).

The chain crosses the membrane as a helical span at residues 45-65; that stretch reads FIMSCVGFAVGLGNVWRFPYL. Residues 66-71 are Extracellular-facing; sequence CYKNGG. A helical membrane pass occupies residues 72-92; sequence GVFLIPYLLVAVFGGIPIFFL. At 93-122 the chain is on the cytoplasmic side; it reads EISLGQFMKAGGINAWNIAPLFKGLGYASM. Residues 123 to 143 traverse the membrane as a helical segment; the sequence is VIVFFCNTYYILVLTWSSFYL. Over 144–207 the chain is Extracellular; that stretch reads VQSFSSPLPW…LSSGLGDVGE (64 aa). Residues asparagine 157 and asparagine 171 are each glycosylated (N-linked (GlcNAc...) asparagine). The helical transmembrane segment at 208–228 threads the bilayer; the sequence is IGWELTLCLTATWMLVYFCIW. The Cytoplasmic segment spans residues 229–246; that stretch reads KGVKTSGKVVYVTATFPY. The helical transmembrane segment at 247–267 threads the bilayer; sequence IILVILLVRGVTLHGAVQGIV. At 268-281 the chain is on the extracellular side; the sequence is YYLQPDWGKLGEAQ. The helical transmembrane segment at 282-302 threads the bilayer; that stretch reads VWIDAGTQIFFSYAIGLGTLT. The Cytoplasmic segment spans residues 303-318; that stretch reads ALGSYNQLHNDCYKDA. A helical transmembrane segment spans residues 319–339; that stretch reads FILSLVNSATSFFAGLVVFSI. Over 340–371 the chain is Extracellular; it reads LGFMAVEEGVDISVVAESGPGLAFIAYPKAVT. Residues 372–392 form a helical membrane-spanning segment; it reads LMPFPQVWAVLFFIMLLCLGL. Topologically, residues 393–421 are cytoplasmic; that stretch reads GSQFVGVEGFVTAILDLWPSKFSFRYLRE. Residues 422–442 traverse the membrane as a helical segment; that stretch reads VVVAMVICLSFLIDLSMITEG. Over 443–456 the chain is Extracellular; sequence GMYIFQIFDYYSAS. A helical transmembrane segment spans residues 457–477; the sequence is GTTLLWTAFWECVAVAWVYGG. Residues 478-497 are Cytoplasmic-facing; the sequence is DRYLDDLAWMLGYRPWALVK. The helical transmembrane segment at 498–518 threads the bilayer; sequence WCWSVITPLVCMGIFTFHLVN. Residues 519–537 are Extracellular-facing; that stretch reads YKPLTYNKTYTYPWWGEAI. Asparagine 525 is a glycosylation site (N-linked (GlcNAc...) asparagine). A helical membrane pass occupies residues 538-558; it reads GWCLALASMLCVPTTVLYSLS. Residues 559-611 lie on the Cytoplasmic side of the membrane; sequence RGRGSLKERWRKLTTPVWASHHLAYKMAGAKINQPCEGVVSCEEKVVIFESVL.

This sequence belongs to the sodium:neurotransmitter symporter (SNF) (TC 2.A.22) family.

Its subcellular location is the membrane. In terms of biological role, required for the uptake of creatine. This chain is Creatine transporter, found in Torpedo marmorata (Marbled electric ray).